The chain runs to 476 residues: Sulfate adenylyltransferase subunit 1 (476 aa).

In terms of domain architecture, tr-type G spans 24–239 (KSLLRFLTCG…LLETVDVDYE (216 aa)). The tract at residues 33–40 (GSVDDGKS) is G1. Residue 33–40 (GSVDDGKS) coordinates GTP. Residues 91–95 (GITID) form a G2 region. A G3 region spans residues 112–115 (DTPG). GTP contacts are provided by residues 112–116 (DTPGH) and 167–170 (NKMD). Positions 167 to 170 (NKMD) are G4. Residues 205-207 (SAL) are G5.

Belongs to the TRAFAC class translation factor GTPase superfamily. Classic translation factor GTPase family. CysN/NodQ subfamily. In terms of assembly, heterodimer composed of CysD, the smaller subunit, and CysN.

It carries out the reaction sulfate + ATP + H(+) = adenosine 5'-phosphosulfate + diphosphate. It functions in the pathway sulfur metabolism; hydrogen sulfide biosynthesis; sulfite from sulfate: step 1/3. With CysD forms the ATP sulfurylase (ATPS) that catalyzes the adenylation of sulfate producing adenosine 5'-phosphosulfate (APS) and diphosphate, the first enzymatic step in sulfur assimilation pathway. APS synthesis involves the formation of a high-energy phosphoric-sulfuric acid anhydride bond driven by GTP hydrolysis by CysN coupled to ATP hydrolysis by CysD. The polypeptide is Sulfate adenylyltransferase subunit 1 (Vibrio parahaemolyticus serotype O3:K6 (strain RIMD 2210633)).